The primary structure comprises 558 residues: Acylase ACY 1 proenzyme (558 aa).

Catalysis depends on Thr-368, which acts as the Nucleophile.

This sequence belongs to the gamma-glutamyltransferase family. Dimer of two non-identical chains processed from the same precursor.

It catalyses the reaction (7R)-7-(4-carboxybutanamido)cephalosporanate + H2O = (7R)-7-aminocephalosporanate + glutarate. It carries out the reaction an N-terminal (5-L-glutamyl)-[peptide] + an alpha-amino acid = 5-L-glutamyl amino acid + an N-terminal L-alpha-aminoacyl-[peptide]. The catalysed reaction is glutathione + H2O = L-cysteinylglycine + L-glutamate. The enzyme catalyses an S-substituted glutathione + H2O = an S-substituted L-cysteinylglycine + L-glutamate. Besides the cephalosporin acylase I activity which converts GL-7ACA into 7-ACA; this enzyme displays some gamma glutamyltranspeptidase activity. This is Acylase ACY 1 proenzyme (acyI) from Pseudomonas sp. (strain SE83).